A 111-amino-acid chain; its full sequence is Universal stress protein B (111 aa).

2 helical membrane-spanning segments follow: residues 1 to 21 (MISTIALFWALCVVCVVNMAR) and 90 to 110 (FILTSALCGLVVVSLIALMIW).

Belongs to the universal stress protein B family.

Its subcellular location is the cell inner membrane. This Klebsiella pneumoniae (strain 342) protein is Universal stress protein B.